Reading from the N-terminus, the 246-residue chain is Probable transcriptional regulatory protein Ent638_2432 (246 aa).

This sequence belongs to the TACO1 family.

It is found in the cytoplasm. In Enterobacter sp. (strain 638), this protein is Probable transcriptional regulatory protein Ent638_2432.